Consider the following 88-residue polypeptide: Small cysteine-rich outer membrane protein OmcA (88 aa).

A signal peptide spans 1 to 18 (MKKTALLAALCSVVSLSS). A lipid anchor (N-palmitoyl cysteine) is attached at C19. C19 is lipidated: S-diacylglycerol cysteine. The disordered stretch occupies residues 67–88 (THQDAEHGPQAREIPVDGKCRQ).

Part of a disulfide cross-linked outer membrane complex (COMC) composed of the major outer membrane porin (MOMP), the small cysteine-rich protein (OmcA) and the large cysteine-rich periplasmic protein (OmcB).

The protein localises to the cell outer membrane. Functionally, in elementary bodies (EBs, the infectious stage, which is able to survive outside the host cell) provides the structural integrity of the outer envelope through disulfide cross-links with the large cysteine-rich periplasmic protein and the major outer membrane porin. It has been described in publications as the Sarkosyl-insoluble COMC (Chlamydia outer membrane complex), and serves as the functional equivalent of peptidoglycan. This chain is Small cysteine-rich outer membrane protein OmcA (omcA), found in Chlamydia trachomatis serovar L2 (strain ATCC VR-902B / DSM 19102 / 434/Bu).